Here is a 1089-residue protein sequence, read N- to C-terminus: Probable transport protein MmpL8 (1089 aa).

The tract at residues 1-26 (MCDVLMQPVRTPRPSTNLRSKPLRPT) is disordered. 12 helical membrane passes run 44–64 (WVVI…VPSL), 222–242 (ITIL…TMVL), 257–277 (LVAI…IFMS), 316–336 (IGKV…GMVF), 349–369 (LGIS…ALMV), 400–420 (KTHL…AGLA), 555–575 (AIST…LLGG), 874–894 (IIAM…RAIV), 898–918 (YLIG…VIVF), 930–950 (IPGL…MLLI), 973–993 (GGVI…LVFA), and 996–1016 (GSVV…TFLV). Residues 1056–1078 (RTKRKPLLPKEEEEQSPPDDDDL) are disordered. A compositionally biased stretch (acidic residues) spans 1066–1078 (EEEEQSPPDDDDL).

Belongs to the resistance-nodulation-cell division (RND) (TC 2.A.6) family. MmpL subfamily.

It is found in the cell membrane. This Mycobacterium tuberculosis (strain ATCC 25177 / H37Ra) protein is Probable transport protein MmpL8 (mmpL8).